We begin with the raw amino-acid sequence, 208 residues long: Type 4 adapter protein LvgA (208 aa).

The tract at residues 184-208 (GYGYPPESPRENYKHPVSSATTARK) is disordered.

As to quaternary structure, the T4BSS is a complex nanomachine composed of several subcomplexes. This subunit is part of the Type IV Coupling Complex (T4CC), a subcomplex composed of the DotLMNYZ core and the IcmSW-LvgA adapter subunits, linked by the C-terminal tail of DotL.

It localises to the cytoplasm. In terms of biological role, component of the Dot/Icm type IVB secretion system (T4BSS), which is used to inject bacterial effector proteins into eukaryotic host cells. Part of a subcomplex which recruits effector proteins and delivers them to the core transmembrane subcomplex. Is a critical subunit for binding a subset of effector proteins. Recognizes more than one type of binding motif. May be a critical factor that confers host specificity. Necessary for full virulence of the bacterium in guinea pigs and presumably humans. The protein is Type 4 adapter protein LvgA of Legionella pneumophila.